The chain runs to 456 residues: Probable flavin-containing monoamine oxidase A (456 aa).

Cys-394 carries the S-8alpha-FAD cysteine modification.

The protein belongs to the flavin monoamine oxidase family. FAD serves as cofactor.

It catalyses the reaction a secondary aliphatic amine + O2 + H2O = a primary amine + an aldehyde + H2O2. This chain is Probable flavin-containing monoamine oxidase A (maoA), found in Dictyostelium discoideum (Social amoeba).